The following is a 961-amino-acid chain: Ras-interacting protein 1 (961 aa).

The span at 1 to 10 (MLSGERKEGG) shows a compositional bias: basic and acidic residues. Disordered stretches follow at residues 1 to 21 (MLSG…HLPV), 35 to 70 (LGRR…PHVE), and 96 to 116 (RGSG…QRWA). Low complexity predominate over residues 41–57 (SAASVKSSSSDTGSRSS). Pro residues predominate over residues 59 to 68 (PLPPPPPPPH). Arginine 96 carries the post-translational modification Omega-N-methylarginine. Over residues 98–110 (SGAGGAGGPGTPG) the composition is skewed to gly residues. Positions 141 to 253 (PPGVLKIFAS…RRFELRGREE (113 aa)) constitute a Ras-associating domain. The disordered stretch occupies residues 261 to 352 (AFGAADADGT…MAPGAADAQM (92 aa)). Serine 274 and serine 286 each carry phosphoserine. The segment covering 284–295 (AASGGAALASPG) has biased composition (low complexity). Positions 296-307 (PGSGSGTPTGSG) are enriched in gly residues. The segment covering 314-327 (NLSLRRSVSELSLQ) has biased composition (low complexity). Phosphoserine is present on residues serine 320, serine 322, serine 325, and serine 413. Residues 594-895 (GRLARLIKEA…PPAERDAVDT (302 aa)) form the Dilute domain.

In terms of assembly, interacts with Ras family members that have been activated by GTP binding. Interacts with HRAS, RAP1A, RAP2, RRAS, RAF1 and RRAS2. Interacts with MYH9 and ARHGAP29. In terms of tissue distribution, detected in kidney, heart, skeletal muscle, small intestine and lung.

It is found in the cytoplasm. The protein resides in the perinuclear region. It localises to the golgi apparatus. The protein localises to the golgi stack. In terms of biological role, required for the proper formation of vascular structures that develop via both vasculogenesis and angiogenesis. Acts as a critical and vascular-specific regulator of GTPase signaling, cell architecture, and adhesion, which is essential for endothelial cell morphogenesis and blood vessel tubulogenesis. Regulates the activity of Rho GTPases in part by recruiting ARHGAP29 and suppressing RhoA signaling and dampening ROCK and MYH9 activities in endothelial cells. May act as effector for Golgi-bound HRAS and other Ras-like proteins. May promote HRAS-mediated transformation. Negative regulator of amino acid starvation-induced autophagy. The polypeptide is Ras-interacting protein 1 (Rasip1) (Mus musculus (Mouse)).